A 423-amino-acid chain; its full sequence is Histidine--tRNA ligase 2 (423 aa).

It belongs to the class-II aminoacyl-tRNA synthetase family. In terms of assembly, homodimer.

It is found in the cytoplasm. It carries out the reaction tRNA(His) + L-histidine + ATP = L-histidyl-tRNA(His) + AMP + diphosphate + H(+). This is Histidine--tRNA ligase 2 from Bacillus anthracis.